The primary structure comprises 261 residues: Ribonuclease HII (261 aa).

The 189-residue stretch at 71–259 (KYIAGVDEVG…VKESKLHFDS (189 aa)) folds into the RNase H type-2 domain. A divalent metal cation contacts are provided by aspartate 77, glutamate 78, and aspartate 169.

It belongs to the RNase HII family. The cofactor is Mn(2+). It depends on Mg(2+) as a cofactor.

The protein resides in the cytoplasm. The catalysed reaction is Endonucleolytic cleavage to 5'-phosphomonoester.. In terms of biological role, endonuclease that specifically degrades the RNA of RNA-DNA hybrids. The chain is Ribonuclease HII from Listeria monocytogenes serovar 1/2a (strain ATCC BAA-679 / EGD-e).